A 282-amino-acid polypeptide reads, in one-letter code: tRNA pseudouridine synthase B (282 aa).

D36 functions as the Nucleophile in the catalytic mechanism.

This sequence belongs to the pseudouridine synthase TruB family. Type 1 subfamily.

The catalysed reaction is uridine(55) in tRNA = pseudouridine(55) in tRNA. Functionally, responsible for synthesis of pseudouridine from uracil-55 in the psi GC loop of transfer RNAs. The protein is tRNA pseudouridine synthase B of Mycoplasmopsis pulmonis (strain UAB CTIP) (Mycoplasma pulmonis).